Reading from the N-terminus, the 1979-residue chain is Repetitive organellar protein (1979 aa).

The span at 1 to 12 shows a compositional bias: basic residues; it reads MVFTFKNKKKKK. Disordered stretches follow at residues 1 to 42 and 54 to 116; these read MVFT…DSWY and TKYK…NNYS. Composition is skewed to basic and acidic residues over residues 13–24 and 31–42; these read EASSDKVSKESF and NNEKREKSDSWY. Residues 68–114 are compositionally biased toward low complexity; the sequence is EDIINNNNNNNNDNNNDNNNDNNNDNNNDNNNDNNNENNNDNNNFNN. Coiled-coil stretches lie at residues 127-366, 412-666, 693-876, 992-1094, 1126-1307, and 1398-1467; these read DNEL…LKDE, LKVY…EMEL, LKES…KKKQ, KKKH…YKTI, VDKI…MNIK, and IANY…LTSQ.

Its subcellular location is the host cell membrane. This Plasmodium falciparum (isolate 3D7) protein is Repetitive organellar protein.